The following is a 313-amino-acid chain: 3'-5' exoribonuclease YhaM (313 aa).

The HD domain maps to 163 to 279 (HVVSMLRLAK…LHQIDLMDAS (117 aa)).

This sequence belongs to the YhaM family.

Its function is as follows. Shows a 3'-5' exoribonuclease activity. This is 3'-5' exoribonuclease YhaM from Listeria monocytogenes serotype 4b (strain CLIP80459).